The sequence spans 184 residues: Autophagy-related protein 101 (184 aa).

This sequence belongs to the ATG101 family. In terms of assembly, component of the atg1 kinase complex composed of at least atg1, atg13, atg17 and atg101. Interacts directly with atg13.

The protein localises to the cytoplasm. It is found in the nucleus. The protein resides in the preautophagosomal structure membrane. Autophagy factor required for autophagosome formation. Component of the atg1 kinase complex in which it stabilizes atg13. Is also responsible for recruiting downstream factors to the autophagosome-formation site. Has a role in meiosis and sporulation. The sequence is that of Autophagy-related protein 101 from Schizosaccharomyces pombe (strain 972 / ATCC 24843) (Fission yeast).